The chain runs to 538 residues: Probable inorganic phosphate transporter 1-4 (538 aa).

The Cytoplasmic portion of the chain corresponds to 1 to 23 (MAGELKVLNALDSAKTQWYHFTA). A helical membrane pass occupies residues 24–44 (IVIAGMGFFTDAYDLFSISLV). Over 45–69 (TKLLGRIYYFNPASKSPGSLPPNVS) the chain is Extracellular. The chain crosses the membrane as a helical span at residues 70–90 (AAVNGVAFCGTLAGQLFFGWL). Topologically, residues 91–98 (GDKMGRKK) are cytoplasmic. The helical transmembrane segment at 99-119 (VYGMTLMLMVICCLASGLSFG) threads the bilayer. Topologically, residues 120 to 123 (SSAK) are extracellular. Residues 124-144 (GVMATLCFFRFWLGFGIGGDY) traverse the membrane as a helical segment. Residues 145–163 (PLSATIMSEYANKRTRGAF) are Cytoplasmic-facing. Residues 164–184 (IAAVFAMQGFGNLTGGIVAII) form a helical membrane-spanning segment. Topologically, residues 185 to 210 (VSAAFKARFDAPAYRDDRAGSTVPQA) are extracellular. A helical transmembrane segment spans residues 211 to 231 (DYAWRIVLMFGAIPALLTYYW). The Cytoplasmic portion of the chain corresponds to 232 to 294 (RMKMPETARY…RQFLRRHGRH (63 aa)). Residues 295–315 (LLGTTVCWFVLDIAFYSSNLF) traverse the membrane as a helical segment. Residues 316–346 (QKDIYTAVQWLPKADTMSALEEMFKISRAQT) lie on the Extracellular side of the membrane. Residues 347–367 (LVALCGTIPGYWFTVFFIDII) traverse the membrane as a helical segment. At 368–369 (GR) the chain is on the cytoplasmic side. A helical membrane pass occupies residues 370-390 (FVIQLGGFFFMTAFMLGLAVP). The Extracellular portion of the chain corresponds to 391 to 396 (YHHWTT). A helical membrane pass occupies residues 397-417 (PGNHIGFVVMYAFTFFFANFG). Residues 418 to 440 (PNSTTFIVPAEIFPARLRSTCHG) are Cytoplasmic-facing. A helical transmembrane segment spans residues 441 to 461 (ISAAAGKAGAIVGSFGFLYAA). Topologically, residues 462–481 (QSTDASKTDAGYPPGIGVRN) are extracellular. Residues 482–502 (SLFFLAGCNVIGFFFTFLVPE) traverse the membrane as a helical segment. Over 503 to 538 (SKGKSLEELSGENEDDDDVPEAPSTADHRTAPAPPA) the chain is Cytoplasmic. The disordered stretch occupies residues 507–538 (SLEELSGENEDDDDVPEAPSTADHRTAPAPPA). Residues 511 to 522 (LSGENEDDDDVP) show a composition bias toward acidic residues.

The protein belongs to the major facilitator superfamily. Phosphate:H(+) symporter (TC 2.A.1.9) family.

The protein localises to the membrane. High-affinity transporter for external inorganic phosphate. This chain is Probable inorganic phosphate transporter 1-4 (PHT1-4), found in Oryza sativa subsp. indica (Rice).